The following is a 228-amino-acid chain: NAD(P)H-hydrate epimerase (228 aa).

Positions 9-215 (AISIDEELFN…RLEEKYSLEL (207 aa)) constitute a YjeF N-terminal domain. 58-62 (NNGGD) contributes to the (6S)-NADPHX binding site. K(+) is bound by residues Asn59 and Asp123. Residues 127–133 (GFSFKPP) and Asp156 each bind (6S)-NADPHX. Ser159 provides a ligand contact to K(+).

This sequence belongs to the NnrE/AIBP family. K(+) is required as a cofactor.

It catalyses the reaction (6R)-NADHX = (6S)-NADHX. It carries out the reaction (6R)-NADPHX = (6S)-NADPHX. In terms of biological role, catalyzes the epimerization of the S- and R-forms of NAD(P)HX, a damaged form of NAD(P)H that is a result of enzymatic or heat-dependent hydration. This is a prerequisite for the S-specific NAD(P)H-hydrate dehydratase to allow the repair of both epimers of NAD(P)HX. This Anopheles darlingi (Mosquito) protein is NAD(P)H-hydrate epimerase.